The sequence spans 267 residues: Indole-3-glycerol phosphate synthase (267 aa).

The protein belongs to the TrpC family.

The enzyme catalyses 1-(2-carboxyphenylamino)-1-deoxy-D-ribulose 5-phosphate + H(+) = (1S,2R)-1-C-(indol-3-yl)glycerol 3-phosphate + CO2 + H2O. Its pathway is amino-acid biosynthesis; L-tryptophan biosynthesis; L-tryptophan from chorismate: step 4/5. This Cupriavidus taiwanensis (strain DSM 17343 / BCRC 17206 / CCUG 44338 / CIP 107171 / LMG 19424 / R1) (Ralstonia taiwanensis (strain LMG 19424)) protein is Indole-3-glycerol phosphate synthase.